We begin with the raw amino-acid sequence, 220 residues long: Ribose-5-phosphate isomerase A (220 aa).

Residues 28 to 31 (TGST), 81 to 84 (DGAD), and 94 to 97 (KGGG) contribute to the substrate site. Glu103 functions as the Proton acceptor in the catalytic mechanism. Lys121 contributes to the substrate binding site.

This sequence belongs to the ribose 5-phosphate isomerase family. In terms of assembly, homodimer.

It carries out the reaction aldehydo-D-ribose 5-phosphate = D-ribulose 5-phosphate. It functions in the pathway carbohydrate degradation; pentose phosphate pathway; D-ribose 5-phosphate from D-ribulose 5-phosphate (non-oxidative stage): step 1/1. In terms of biological role, catalyzes the reversible conversion of ribose-5-phosphate to ribulose 5-phosphate. The protein is Ribose-5-phosphate isomerase A of Hydrogenovibrio crunogenus (strain DSM 25203 / XCL-2) (Thiomicrospira crunogena).